Here is a 327-residue protein sequence, read N- to C-terminus: Glycerol-3-phosphate acyltransferase (327 aa).

The next 5 helical transmembrane spans lie at 3-23 (SLLW…LLFA), 52-72 (VGVL…AVAL), 78-98 (TVFH…SCFL), 112-132 (VFLP…LAVI), and 152-172 (MLLL…MVLV). Disordered stretches follow at residues 184–212 (SRGE…EAAA) and 233–327 (PSTE…SSGQ). Positions 199–212 (AQGTDAGAAPEAAA) are enriched in low complexity. Residues 237 to 246 (AAPSQETSDA) are compositionally biased toward polar residues. Positions 259–271 (EGDKRENEEHDNA) are enriched in basic and acidic residues.

Belongs to the PlsY family. Probably interacts with PlsX.

The protein resides in the cell inner membrane. It catalyses the reaction an acyl phosphate + sn-glycerol 3-phosphate = a 1-acyl-sn-glycero-3-phosphate + phosphate. The protein operates within lipid metabolism; phospholipid metabolism. In terms of biological role, catalyzes the transfer of an acyl group from acyl-phosphate (acyl-PO(4)) to glycerol-3-phosphate (G3P) to form lysophosphatidic acid (LPA). This enzyme utilizes acyl-phosphate as fatty acyl donor, but not acyl-CoA or acyl-ACP. In Nitratidesulfovibrio vulgaris (strain ATCC 29579 / DSM 644 / CCUG 34227 / NCIMB 8303 / VKM B-1760 / Hildenborough) (Desulfovibrio vulgaris), this protein is Glycerol-3-phosphate acyltransferase.